Reading from the N-terminus, the 524-residue chain is Probable pectinesterase/pectinesterase inhibitor 19 (524 aa).

A signal peptide spans 1–22 (MLVKVFSFFILMITMVVIGVSK). The pectinesterase inhibitor 19 stretch occupies residues 23–172 (EYCDDKQSCQ…ISRARIALAL (150 aa)). The tract at residues 215–510 (DVVVAKDGTG…FTVAKLLDGE (296 aa)) is pectinesterase 19. 2 N-linked (GlcNAc...) asparagine glycosylation sites follow: N265 and N281. T290 serves as a coordination point for substrate. D343 functions as the Proton donor; for pectinesterase activity in the catalytic mechanism. A disulfide bridge connects residues C357 and C377. The active-site Nucleophile; for pectinesterase activity is the D364. Residue N412 is glycosylated (N-linked (GlcNAc...) asparagine). Residues R430 and W432 each contribute to the substrate site.

The protein in the N-terminal section; belongs to the PMEI family. It in the C-terminal section; belongs to the pectinesterase family. In terms of tissue distribution, expressed in siliques, but not in flower buds.

Its subcellular location is the secreted. The protein localises to the cell wall. It carries out the reaction [(1-&gt;4)-alpha-D-galacturonosyl methyl ester](n) + n H2O = [(1-&gt;4)-alpha-D-galacturonosyl](n) + n methanol + n H(+). Its pathway is glycan metabolism; pectin degradation; 2-dehydro-3-deoxy-D-gluconate from pectin: step 1/5. Acts in the modification of cell walls via demethylesterification of cell wall pectin. The polypeptide is Probable pectinesterase/pectinesterase inhibitor 19 (PME19) (Arabidopsis thaliana (Mouse-ear cress)).